The sequence spans 103 residues: MIGKEVTVQDFTLELSELQPEVLPVDLLCEEELPNEQETEEESDIDRTVFKIIAPCGCSSCEVNLRIFVNATDTGIRTLQDLLISDLQLLCPECRGNCKHGGF.

The interval 1-47 is E7 terminal domain; it reads MIGKEVTVQDFTLELSELQPEVLPVDLLCEEELPNEQETEEESDIDR. Residues 27 to 31 carry the LXCXE motif; interaction with host RB1 and TMEM173/STING motif; sequence LLCEE. Residues 56-94 fold into a zinc finger; that stretch reads CGCSSCEVNLRIFVNATDTGIRTLQDLLISDLQLLCPEC. The Nuclear export signal signature appears at 76 to 84; sequence IRTLQDLLI.

The protein belongs to the papillomaviridae E7 protein family. As to quaternary structure, homodimer. Homooligomer. Interacts with host RB1; this interaction induces dissociation of RB1-E2F1 complex thereby disrupting RB1 activity. Interacts with host EP300; this interaction represses EP300 transcriptional activity. Interacts with protein E2; this interaction inhibits E7 oncogenic activity. Interacts with host TMEM173/STING; this interaction impairs the ability of TMEM173/STING to sense cytosolic DNA and promote the production of type I interferon (IFN-alpha and IFN-beta). In terms of processing, highly phosphorylated.

Its subcellular location is the host cytoplasm. It is found in the host nucleus. Plays a role in viral genome replication by driving entry of quiescent cells into the cell cycle. Stimulation of progression from G1 to S phase allows the virus to efficiently use the cellular DNA replicating machinery to achieve viral genome replication. E7 protein has both transforming and trans-activating activities. Induces the disassembly of the E2F1 transcription factor from RB1, with subsequent transcriptional activation of E2F1-regulated S-phase genes. Interferes with host histone deacetylation mediated by HDAC1 and HDAC2, leading to transcription activation. Also plays a role in the inhibition of both antiviral and antiproliferative functions of host interferon alpha. Interaction with host TMEM173/STING impairs the ability of TMEM173/STING to sense cytosolic DNA and promote the production of type I interferon (IFN-alpha and IFN-beta). This Homo sapiens (Human) protein is Protein E7.